Here is a 169-residue protein sequence, read N- to C-terminus: ATP synthase subunit b (169 aa).

The chain crosses the membrane as a helical span at residues 12–32 (PSVGLIFWKTVAFLIFLYILY). The interval 69–107 (AENEEARREAEQKAQQILREARDSAEELREEEKAKTRRE) is disordered. Positions 87-107 (REARDSAEELREEEKAKTRRE) are enriched in basic and acidic residues.

The protein belongs to the ATPase B chain family. As to quaternary structure, F-type ATPases have 2 components, F(1) - the catalytic core - and F(0) - the membrane proton channel. F(1) has five subunits: alpha(3), beta(3), gamma(1), delta(1), epsilon(1). F(0) has three main subunits: a(1), b(2) and c(10-14). The alpha and beta chains form an alternating ring which encloses part of the gamma chain. F(1) is attached to F(0) by a central stalk formed by the gamma and epsilon chains, while a peripheral stalk is formed by the delta and b chains.

The protein localises to the cell inner membrane. Its function is as follows. F(1)F(0) ATP synthase produces ATP from ADP in the presence of a proton or sodium gradient. F-type ATPases consist of two structural domains, F(1) containing the extramembraneous catalytic core and F(0) containing the membrane proton channel, linked together by a central stalk and a peripheral stalk. During catalysis, ATP synthesis in the catalytic domain of F(1) is coupled via a rotary mechanism of the central stalk subunits to proton translocation. In terms of biological role, component of the F(0) channel, it forms part of the peripheral stalk, linking F(1) to F(0). The polypeptide is ATP synthase subunit b (Salinibacter ruber (strain DSM 13855 / M31)).